The primary structure comprises 422 residues: UDP-N-acetylglucosamine 1-carboxyvinyltransferase (422 aa).

22–23 (KN) is a phosphoenolpyruvate binding site. R93 serves as a coordination point for UDP-N-acetyl-alpha-D-glucosamine. Residue C117 is the Proton donor of the active site. C117 carries the 2-(S-cysteinyl)pyruvic acid O-phosphothioketal modification. UDP-N-acetyl-alpha-D-glucosamine-binding positions include 122–126 (RPVDL), D308, and I330.

This sequence belongs to the EPSP synthase family. MurA subfamily.

Its subcellular location is the cytoplasm. It catalyses the reaction phosphoenolpyruvate + UDP-N-acetyl-alpha-D-glucosamine = UDP-N-acetyl-3-O-(1-carboxyvinyl)-alpha-D-glucosamine + phosphate. It functions in the pathway cell wall biogenesis; peptidoglycan biosynthesis. Cell wall formation. Adds enolpyruvyl to UDP-N-acetylglucosamine. In Legionella pneumophila (strain Paris), this protein is UDP-N-acetylglucosamine 1-carboxyvinyltransferase.